We begin with the raw amino-acid sequence, 396 residues long: CCA-adding enzyme (396 aa).

The ATP site is built by Gly27 and Arg30. CTP contacts are provided by Gly27 and Arg30. Mg(2+) contacts are provided by Asp40 and Asp42. Residues Arg111, Asp154, Arg157, Arg160, and Arg163 each coordinate ATP. CTP contacts are provided by Arg111, Asp154, Arg157, Arg160, and Arg163.

The protein belongs to the tRNA nucleotidyltransferase/poly(A) polymerase family. Bacterial CCA-adding enzyme type 3 subfamily. In terms of assembly, homodimer. Mg(2+) is required as a cofactor.

It catalyses the reaction a tRNA precursor + 2 CTP + ATP = a tRNA with a 3' CCA end + 3 diphosphate. The catalysed reaction is a tRNA with a 3' CCA end + 2 CTP + ATP = a tRNA with a 3' CCACCA end + 3 diphosphate. In terms of biological role, catalyzes the addition and repair of the essential 3'-terminal CCA sequence in tRNAs without using a nucleic acid template. Adds these three nucleotides in the order of C, C, and A to the tRNA nucleotide-73, using CTP and ATP as substrates and producing inorganic pyrophosphate. tRNA 3'-terminal CCA addition is required both for tRNA processing and repair. Also involved in tRNA surveillance by mediating tandem CCA addition to generate a CCACCA at the 3' terminus of unstable tRNAs. While stable tRNAs receive only 3'-terminal CCA, unstable tRNAs are marked with CCACCA and rapidly degraded. The chain is CCA-adding enzyme from Bacillus velezensis (strain DSM 23117 / BGSC 10A6 / LMG 26770 / FZB42) (Bacillus amyloliquefaciens subsp. plantarum).